The sequence spans 284 residues: D-tagatose-1,6-bisphosphate aldolase subunit GatY (284 aa).

The Proton donor role is filled by D82. Zn(2+)-binding residues include H83 and H180. G181 is a dihydroxyacetone phosphate binding site. H208 contacts Zn(2+). Dihydroxyacetone phosphate contacts are provided by residues G209–S211 and N230–T233.

It belongs to the class II fructose-bisphosphate aldolase family. TagBP aldolase GatY subfamily. As to quaternary structure, forms a complex with GatZ. Requires Zn(2+) as cofactor.

The catalysed reaction is D-tagatofuranose 1,6-bisphosphate = D-glyceraldehyde 3-phosphate + dihydroxyacetone phosphate. The protein operates within carbohydrate metabolism; D-tagatose 6-phosphate degradation; D-glyceraldehyde 3-phosphate and glycerone phosphate from D-tagatose 6-phosphate: step 2/2. Its function is as follows. Catalytic subunit of the tagatose-1,6-bisphosphate aldolase GatYZ, which catalyzes the reversible aldol condensation of dihydroxyacetone phosphate (DHAP or glycerone-phosphate) with glyceraldehyde 3-phosphate (G3P) to produce tagatose 1,6-bisphosphate (TBP). Requires GatZ subunit for full activity and stability. Is involved in the catabolism of galactitol. The protein is D-tagatose-1,6-bisphosphate aldolase subunit GatY of Escherichia coli O8 (strain IAI1).